A 361-amino-acid chain; its full sequence is Outer mitochondrial transmembrane helix translocase (361 aa).

Residues 1–15 are Mitochondrial intermembrane-facing; it reads MVHAEAFSRPLSRNE. The chain crosses the membrane as a helical span at residues 16–32; that stretch reads VVGLIFRLTIFGAVTYF. The Cytoplasmic segment spans residues 33 to 361; that stretch reads TIKWMVDAID…QNVLTHVCLD (329 aa). Residue 133–140 coordinates ATP; the sequence is GPPGCGKT. At Ser-322 the chain carries Phosphoserine.

It belongs to the AAA ATPase family. MSP1 subfamily. As to quaternary structure, interacts with GRIA2 and GRIP1 in an ATP-dependent manner. ATAD1-catalyzed ATP hydrolysis disrupts not only its binding to GRIA2 and GRIP1, but also interaction between GRIP1 and GRIA2, leading to AMPAR complex disassembly.

The protein resides in the mitochondrion outer membrane. Its subcellular location is the peroxisome membrane. It localises to the postsynaptic cell membrane. The enzyme catalyses [protein]-with a C-terminal TM segment(out) + ATP + H2O = [protein]-with a C-terminal TM segment(in) + ADP + phosphate + H(+). In terms of biological role, outer mitochondrial translocase required to remove mislocalized tail-anchored transmembrane proteins on mitochondria. Specifically recognizes and binds tail-anchored transmembrane proteins: acts as a dislocase that mediates the ATP-dependent extraction of mistargeted tail-anchored transmembrane proteins from the mitochondrion outer membrane. Also plays a critical role in regulating the surface expression of AMPA receptors (AMPAR), thereby regulating synaptic plasticity and learning and memory. Required for NMDA-stimulated AMPAR internalization and inhibition of GRIA1 and GRIA2 recycling back to the plasma membrane; these activities are ATPase-dependent. This Homo sapiens (Human) protein is Outer mitochondrial transmembrane helix translocase.